The sequence spans 536 residues: MGASTFSQSFAEKYEAWASVMLPALVGFAFLIYQAFFAIKYPANLPLAGEPDGKRTFSWRTRWRYYTDCEALYKETYENYTKRGKTVLLPGLGFRHDIILPQSSMRDIMAHPEKELSHADAVLELVQLKYSLGHEKYKADPWPCMLVKSDINSKLEAVCDGMNEELKYAFDKYIGCDTESWKEIDLLETIRMVIIAAASRFTVGFPLCRNEAYLRACWKVNDGIMMNGGLTGATPRLLRPIFGPLITMNLRRNIEKIKKQVEPVYCQRVQALSQQNSAEKPDSEEPKDLFQQMLRYAQKERPRELHDLPSMSRRLAFANFAAVHQTTILVTNMILNIVSSDSQYNTISVLRDEVNDIIGPDSNTKWTKYKVAQMIKSDSVARETMRLHSNTNRGVFRKVLVEGIKTEDGIELPKGAYVSFLGRPLQCNPETFEDPFKYDPFRFSRVREKAPRDAKATSNLSFVSTSPEHLPFGHGGHSCPGRFLVDFEVKMIVAYLLMNYDVEFPAEYNGQRPASRWMAEALMPPSGARIRIKRRS.

The chain crosses the membrane as a helical span at residues Val20–Ile39. Residue Cys479 coordinates heme.

This sequence belongs to the cytochrome P450 family. Requires heme as cofactor.

The protein localises to the membrane. It functions in the pathway secondary metabolite biosynthesis; terpenoid biosynthesis. Its function is as follows. Cytochrome P450 monooxygenase; part of the gene cluster that mediates the biosynthesis of the sesquiterpenoid aspterric acid (AA), an inhibitor of dihydroxy-acid dehydratase (DHAD) effective as an herbicide. PbrC catalyzes the third and last step within the pathway and converts the alpha-epoxy carboxylate intermediate produced by the cytochrome P450 monooxygenase pbrB from (-)daucane into the tricyclic aspterric acid. This Penicillium brasilianum protein is Cytochrome P450 monooxygenase pbrC.